Consider the following 671-residue polypeptide: tRNA(Met) cytidine acetyltransferase TmcA (671 aa).

ATP-binding positions include Q180, 202–211 (GRGKSALAGQ), and R319. The region spanning 349-531 (IRFSAFTQAL…SGCYTAMALL (183 aa)) is the N-acetyltransferase domain. Acetyl-CoA contacts are provided by residues 461-463 (IAV), 468-474 (QREGIGQ), E499, and R506.

Belongs to the RNA cytidine acetyltransferase family. TmcA subfamily.

It localises to the cytoplasm. It carries out the reaction cytidine(34) in elongator tRNA(Met) + acetyl-CoA + ATP + H2O = N(4)-acetylcytidine(34) in elongator tRNA(Met) + ADP + phosphate + CoA + H(+). Catalyzes the formation of N(4)-acetylcytidine (ac(4)C) at the wobble position of tRNA(Met), by using acetyl-CoA as an acetyl donor and ATP (or GTP). The protein is tRNA(Met) cytidine acetyltransferase TmcA of Citrobacter koseri (strain ATCC BAA-895 / CDC 4225-83 / SGSC4696).